A 542-amino-acid chain; its full sequence is Chaperonin GroEL (542 aa).

Residues 29–32 (TLGP), 86–90 (DGTTT), Gly-413, and Asp-494 each bind ATP.

It belongs to the chaperonin (HSP60) family. Forms a cylinder of 14 subunits composed of two heptameric rings stacked back-to-back. Interacts with the co-chaperonin GroES.

It localises to the cytoplasm. The catalysed reaction is ATP + H2O + a folded polypeptide = ADP + phosphate + an unfolded polypeptide.. Its function is as follows. Together with its co-chaperonin GroES, plays an essential role in assisting protein folding. The GroEL-GroES system forms a nano-cage that allows encapsulation of the non-native substrate proteins and provides a physical environment optimized to promote and accelerate protein folding. This Endomicrobium trichonymphae protein is Chaperonin GroEL.